Consider the following 363-residue polypeptide: Aminomethyltransferase (363 aa).

It belongs to the GcvT family. The glycine cleavage system is composed of four proteins: P, T, L and H.

It catalyses the reaction N(6)-[(R)-S(8)-aminomethyldihydrolipoyl]-L-lysyl-[protein] + (6S)-5,6,7,8-tetrahydrofolate = N(6)-[(R)-dihydrolipoyl]-L-lysyl-[protein] + (6R)-5,10-methylene-5,6,7,8-tetrahydrofolate + NH4(+). In terms of biological role, the glycine cleavage system catalyzes the degradation of glycine. The chain is Aminomethyltransferase from Dechloromonas aromatica (strain RCB).